Here is a 376-residue protein sequence, read N- to C-terminus: N-acetyldiaminopimelate deacetylase (376 aa).

Asp-69 is an active-site residue. The active-site Proton acceptor is the Glu-128.

The protein belongs to the peptidase M20A family. N-acetyldiaminopimelate deacetylase subfamily.

It catalyses the reaction N-acetyl-(2S,6S)-2,6-diaminopimelate + H2O = (2S,6S)-2,6-diaminopimelate + acetate. The protein operates within amino-acid biosynthesis; L-lysine biosynthesis via DAP pathway; LL-2,6-diaminopimelate from (S)-tetrahydrodipicolinate (acetylase route): step 3/3. In terms of biological role, catalyzes the conversion of N-acetyl-diaminopimelate to diaminopimelate and acetate. This is N-acetyldiaminopimelate deacetylase from Streptococcus pneumoniae serotype 19F (strain G54).